Reading from the N-terminus, the 93-residue chain is UPF0358 protein lmo1070 (93 aa).

Belongs to the UPF0358 family.

This chain is UPF0358 protein lmo1070, found in Listeria monocytogenes serovar 1/2a (strain ATCC BAA-679 / EGD-e).